The primary structure comprises 643 residues: 1-deoxy-D-xylulose-5-phosphate synthase (643 aa).

Thiamine diphosphate-binding positions include H72 and 113–115 (GHA). A Mg(2+)-binding site is contributed by D144. Thiamine diphosphate-binding positions include 145-146 (GA), N174, Y287, and E370. Residue N174 participates in Mg(2+) binding.

The protein belongs to the transketolase family. DXPS subfamily. In terms of assembly, homodimer. It depends on Mg(2+) as a cofactor. The cofactor is thiamine diphosphate.

It catalyses the reaction D-glyceraldehyde 3-phosphate + pyruvate + H(+) = 1-deoxy-D-xylulose 5-phosphate + CO2. It functions in the pathway metabolic intermediate biosynthesis; 1-deoxy-D-xylulose 5-phosphate biosynthesis; 1-deoxy-D-xylulose 5-phosphate from D-glyceraldehyde 3-phosphate and pyruvate: step 1/1. In terms of biological role, catalyzes the acyloin condensation reaction between C atoms 2 and 3 of pyruvate and glyceraldehyde 3-phosphate to yield 1-deoxy-D-xylulose-5-phosphate (DXP). This Synechococcus sp. (strain CC9605) protein is 1-deoxy-D-xylulose-5-phosphate synthase.